We begin with the raw amino-acid sequence, 419 residues long: O-methyltransferase desB (419 aa).

S-adenosyl-L-methionine-binding positions include 255–256 (GG), Asp-280, 306–307 (DF), and Arg-323. His-326 (proton acceptor) is an active-site residue.

The protein belongs to the class I-like SAM-binding methyltransferase superfamily. Cation-independent O-methyltransferase family. The cofactor is S-adenosyl-L-methionine.

Its pathway is secondary metabolite biosynthesis. Non-reducing polyketide synthase; part of the gene cluster that mediates the biosynthesis of the bicoumarin desertorin. The non-reducing polyketide synthase desS first catalyzes the formation of the pentaketidic 4,7-dihydroxy-5-methylcoumarin from acetyl coenzyme A and 4 malonyl coenzyme A molecules. Further O-methylation by desB leads to the formation of 7-demethylsiderin. Then, an oxidative phenol coupling catalyzed by the cytochrome P450 monooxygenase desC forms the 6,8'-dimer M-desertorin A via dimerization the monomeric precursor, 7-demethylsiderin. M-desertorin A is further converted to M-desertorin C. The sequence is that of O-methyltransferase desB from Aspergillus desertorum (Emericella desertorum).